The sequence spans 499 residues: MATSVLANWHGHDYQARYFWIEASRLKNPQQDFVVEVSYEADGPKAFDDVITRYNPPRRSTGPDRIQADYYQIKFHVTQAASFGFEDLIDPAFIGAETFSILERLKQAKGTEPANSAFHLVTTDRIIDEDPLGEIISNVDGSIRLDKLFDGTTDRSRKGKVRKLWRQHLKLSTDQELEQVLSGFHIQQSQPTLEAMREKVNTCFQIIGLITCETSSDFRFDGAARALRSQERYRFTREQFTALCEEENWIRSEAPESFRNVALRSFSDGPLDIMDALPEHTLSLLSLFEGRFPSPGIEWNDVIKPQVETFLTGIRQTERKVRLYLNTHSSIAMLAGKCLGHKSGVEIELVQKGRMGDSIWSENESQDEPDAVIETETVGTGSDVAVVLSITRNALPKARAYILENQPDIGRIIHVTPANGHGQRSVKNGSHAVAIAEQVSDVVMDADLPVEASLHIFSAAPNAVNFYLGQHTDFLGTCVFYEFDFQRQRDGSYLPSFKV.

An N-terminal endonuclease domain region spans residues 1–226 (MATSVLANWH…DFRFDGAARA (226 aa)). Catalysis depends on residues D49 and Q72. D49 is a Mg(2+) binding site. Residue I73 coordinates Mg(2+). K74 is a catalytic residue. The segment at 258–464 (FRNVALRSFS…HIFSAAPNAV (207 aa)) is C-terminal SAVED domain.

It belongs to the Cap4 nuclease family. A monomer in the absence of ligand, in its presence it forms oligomers. Requires Mg(2+) as cofactor.

With respect to regulation, DNase activity is activated upon ligand binding (cAAG). Inhibited by EDTA. Effector DNase of a CBASS antivirus system. CBASS (cyclic oligonucleotide-based antiphage signaling system) provides immunity against bacteriophages. The CD-NTase protein (CdnD) synthesizes cyclic nucleotides in response to infection; these serve as specific second messenger signals. The signals activate a diverse range of effectors, leading to bacterial cell death and thus abortive phage infection. A type II-C(AAG) CBASS system. Functionally, binds second messenger 3',3',3'-cyclic AMP-AMP-GMP (cAAG). In the presence of cAAG (synthesized by the cognate CD-NTase protein in the CBASS operon), endonucleolytically degrades dsDNA to approximately 17 bp length fragments, with a preference for 5'-C|NG sites. Only binds DNA in the presence of cAAG. Not activated by c-di-AMP, c-di-GMP, 3',3'-cyclic GMP-AMP (cGAMP) or the second messenger of A.baumanii strain ATCC 27244. Its function is as follows. Protects E.coli against phage T2 infection. When the cdnD-cap2-cap3-cap4 operon is introduced in E.coli there is a more than 10(3) decrease in the efficiency of T2 plaque formation. The operon does not protect against phage T5 and only about 10-fold against T7. Expression of cdnD-cap4 alone protects E.coli against phage T2 infection. The chain is CD-NTase-associated protein 4 from Enterobacter hormaechei subsp. hoffmannii (strain UCI 50).